A 138-amino-acid polypeptide reads, in one-letter code: Rubber elongation factor protein (138 aa).

Ala2 is subject to N-acetylalanine.

This sequence belongs to the REF/SRPP family. In terms of assembly, in solution, able to form amyloid fibers and aggregates rich in beta-sheets. Interaction with membrane stabilizes the protein, inhibiting the amyloid state and aggregation. Not glycosylated. As to expression, localized in all laticifer layers.

The protein localises to the cytoplasm. Its function is as follows. May be part of the rubber biosynthesis machinery. Plays a role in rubber elongation. This Hevea brasiliensis (Para rubber tree) protein is Rubber elongation factor protein.